The chain runs to 275 residues: 2,3,4,5-tetrahydropyridine-2,6-dicarboxylate N-succinyltransferase (275 aa).

Substrate contacts are provided by arginine 108 and aspartate 145.

This sequence belongs to the transferase hexapeptide repeat family. In terms of assembly, homotrimer.

Its subcellular location is the cytoplasm. The enzyme catalyses (S)-2,3,4,5-tetrahydrodipicolinate + succinyl-CoA + H2O = (S)-2-succinylamino-6-oxoheptanedioate + CoA. It functions in the pathway amino-acid biosynthesis; L-lysine biosynthesis via DAP pathway; LL-2,6-diaminopimelate from (S)-tetrahydrodipicolinate (succinylase route): step 1/3. The chain is 2,3,4,5-tetrahydropyridine-2,6-dicarboxylate N-succinyltransferase from Ruegeria pomeroyi (strain ATCC 700808 / DSM 15171 / DSS-3) (Silicibacter pomeroyi).